Here is a 159-residue protein sequence, read N- to C-terminus: 6,7-dimethyl-8-ribityllumazine synthase (159 aa).

Residues Y23, 58–60, and 82–84 contribute to the 5-amino-6-(D-ribitylamino)uracil site; these read AYE and TII. Residue H90 is the Proton donor of the active site. Position 115 (I115) interacts with 5-amino-6-(D-ribitylamino)uracil. A (2S)-2-hydroxy-3-oxobutyl phosphate-binding site is contributed by R129.

The protein belongs to the DMRL synthase family. In terms of assembly, forms an icosahedral capsid composed of 60 subunits, arranged as a dodecamer of pentamers.

The enzyme catalyses (2S)-2-hydroxy-3-oxobutyl phosphate + 5-amino-6-(D-ribitylamino)uracil = 6,7-dimethyl-8-(1-D-ribityl)lumazine + phosphate + 2 H2O + H(+). The protein operates within cofactor biosynthesis; riboflavin biosynthesis; riboflavin from 2-hydroxy-3-oxobutyl phosphate and 5-amino-6-(D-ribitylamino)uracil: step 1/2. Its function is as follows. Catalyzes the formation of 6,7-dimethyl-8-ribityllumazine by condensation of 5-amino-6-(D-ribitylamino)uracil with 3,4-dihydroxy-2-butanone 4-phosphate. This is the penultimate step in the biosynthesis of riboflavin. This is 6,7-dimethyl-8-ribityllumazine synthase from Buchnera aphidicola subsp. Baizongia pistaciae (strain Bp).